A 222-amino-acid polypeptide reads, in one-letter code: Formimidoylglutamase (222 aa).

The Mn(2+) site is built by His34, Asp59, His61, Asp63, Asp150, and Asp152.

Belongs to the arginase family. Requires Mn(2+) as cofactor.

It catalyses the reaction N-formimidoyl-L-glutamate + H2O = formamide + L-glutamate. The protein operates within amino-acid degradation; L-histidine degradation into L-glutamate; L-glutamate from N-formimidoyl-L-glutamate (hydrolase route): step 1/1. Functionally, catalyzes the conversion of N-formimidoyl-L-glutamate to L-glutamate and formamide. The chain is Formimidoylglutamase (hutG) from Klebsiella aerogenes (Enterobacter aerogenes).